A 649-amino-acid chain; its full sequence is V-type ATP synthase subunit I (649 aa).

Helical transmembrane passes span 312 to 332 (FLSF…GLIF), 360 to 380 (FMIL…FFGV), 455 to 475 (DNIL…LGML), 485 to 505 (IGWV…LQAV), 520 to 540 (GQVG…GGII), 556 to 576 (VFSD…GAMV), and 593 to 613 (VLII…GGVI).

Belongs to the V-ATPase 116 kDa subunit family.

The protein resides in the cell membrane. Produces ATP from ADP in the presence of a proton gradient across the membrane. The polypeptide is V-type ATP synthase subunit I (atpI) (Chlamydia muridarum (strain MoPn / Nigg)).